The sequence spans 239 residues: Fumarate reductase iron-sulfur subunit (239 aa).

The 91-residue stretch at 5–95 (LTIRVFKYDP…DGVITLLPLP (91 aa)) folds into the 2Fe-2S ferredoxin-type domain. [2Fe-2S] cluster is bound by residues C57, C62, C65, and C77. A 4Fe-4S ferredoxin-type domain is found at 142 to 171 (AQEVFELDRCIECGCCIAACGTKIMREDFV). [4Fe-4S] cluster-binding residues include C151, C154, and C157. [3Fe-4S] cluster contacts are provided by C161, C208, and C214. C218 serves as a coordination point for [4Fe-4S] cluster.

This sequence belongs to the succinate dehydrogenase/fumarate reductase iron-sulfur protein family. In terms of assembly, part of an enzyme complex containing three subunits: a flavoprotein (frdA), an iron-sulfur protein (frdB), and diheme cytochrome b (frdC). Requires [2Fe-2S] cluster as cofactor. [3Fe-4S] cluster is required as a cofactor. The cofactor is [4Fe-4S] cluster.

The protein localises to the cell inner membrane. It catalyses the reaction a menaquinone + succinate = a menaquinol + fumarate. Its function is as follows. The fumarate reductase enzyme complex is required for fumarate respiration using formate or sulfide as electron donor. The sequence is that of Fumarate reductase iron-sulfur subunit (frdB) from Wolinella succinogenes (strain ATCC 29543 / DSM 1740 / CCUG 13145 / JCM 31913 / LMG 7466 / NCTC 11488 / FDC 602W) (Vibrio succinogenes).